We begin with the raw amino-acid sequence, 147 residues long: Hemoglobin subunit gamma (147 aa).

The Globin domain maps to 3-147 (HFTAEEKAII…VATALAHKYH (145 aa)). Positions 64 and 93 each coordinate heme b.

The protein belongs to the globin family. As to quaternary structure, heterotetramer of two alpha chains and two gamma chains in fetal hemoglobin (Hb F). As to expression, red blood cells.

Functionally, gamma chains make up the fetal hemoglobin F, in combination with alpha chains. The sequence is that of Hemoglobin subunit gamma (HBG) from Otolemur crassicaudatus (Brown greater galago).